Consider the following 370-residue polypeptide: Tyrosyl-DNA phosphodiesterase 2 (370 aa).

At Met1 the chain carries N-acetylmethionine. The interval 1 to 32 (MASGSSSDAAEPAGPAGRAASAPEAAQAEEDR) is disordered. The span at 9–26 (AAEPAGPAGRAASAPEAA) shows a compositional bias: low complexity. A Glycyl lysine isopeptide (Lys-Gly) (interchain with G-Cter in SUMO2) cross-link involves residue Lys34. Thr99 carries the phosphothreonine; by ACVR1B modification. Residues 130–134 (NIDGL) are interaction with 5' end of substrate DNA. The Mg(2+) site is built by Asp132 and Glu162. The interaction with 5' end of substrate DNA stretch occupies residues 236–241 (HLESTR). Residue Asp272 is the Proton donor/acceptor of the active site. Interaction with 5' end of substrate DNA stretches follow at residues 274 to 276 (NLR) and 315 to 321 (LRIPAAY).

Belongs to the CCR4/nocturin family. As to quaternary structure, interacts with TRAF2, TRAF3, TRAF5, TRAF6, TNFRSF8/CD30, TNFRSF5/CD40, TNFRSF1B/TNF-R75, ETS1, ETS2, FLI1, SMAD3 and ACVR1B/ALK4. It depends on Mg(2+) as a cofactor. Mn(2+) serves as cofactor. In terms of processing, ubiquitinated by TRAF6. In terms of tissue distribution, widely expressed. Expressed in whole brain, cerebellum, quiescent cortical astrocytes and cerebellar granule neurons.

The protein localises to the nucleus. It localises to the PML body. Its subcellular location is the nucleolus. The protein resides in the cytoplasm. In terms of biological role, DNA repair enzyme that can remove a variety of covalent adducts from DNA through hydrolysis of a 5'-phosphodiester bond, giving rise to DNA with a free 5' phosphate. Catalyzes the hydrolysis of dead-end complexes between DNA and the topoisomerase 2 (TOP2) active site tyrosine residue. The 5'-tyrosyl DNA phosphodiesterase activity can enable the repair of TOP2-induced DNA double-strand breaks/DSBs without the need for nuclease activity, creating a 'clean' DSB with 5'-phosphate termini that are ready for ligation. Thereby, protects the transcription of many genes involved in neurological development and maintenance from the abortive activity of TOP2. Hydrolyzes 5'-phosphoglycolates on protruding 5' ends on DSBs due to DNA damage by radiation and free radicals. Has preference for single-stranded DNA or duplex DNA with a 4 base pair overhang as substrate. Also has 3'-tyrosyl DNA phosphodiesterase activity, but less efficiently and much slower than TDP1. Constitutes the major if not only 5'-tyrosyl-DNA phosphodiesterase in cells. Also acts as an adapter by participating in the specific activation of MAP3K7/TAK1 in response to TGF-beta: associates with components of the TGF-beta receptor-TRAF6-TAK1 signaling module and promotes their ubiquitination dependent complex formation. Involved in non-canonical TGF-beta induced signaling routes. May also act as a negative regulator of ETS1 and may inhibit NF-kappa-B activation. Acts as a regulator of ribosome biogenesis following stress. In Mus musculus (Mouse), this protein is Tyrosyl-DNA phosphodiesterase 2 (Tdp2).